Reading from the N-terminus, the 218-residue chain is Kappa-scoloptoxin(11)-Ssd1b (218 aa).

Positions 1–16 (MFYSHLLFFTFTFACS) are cleaved as a signal peptide. Positions 17-25 (SSLNRKTKR) are excised as a propeptide.

Contains 8 disulfide bonds. Expressed by the venom gland.

It is found in the secreted. Voltage-gated potassium channel inhibitor. In Scolopendra dehaani (Thai centipede), this protein is Kappa-scoloptoxin(11)-Ssd1b.